The following is a 289-amino-acid chain: Shikimate dehydrogenase (NADP(+)) (289 aa).

Shikimate contacts are provided by residues 20–22 and Ser-67; that span reads SIS. The active-site Proton acceptor is Lys-71. An NADP(+)-binding site is contributed by Asp-83. 2 residues coordinate shikimate: Asn-92 and Asp-107. NADP(+)-binding positions include 132–136 and Val-230; that span reads GGGGA. Position 232 (Tyr-232) interacts with shikimate. Residue Gly-253 coordinates NADP(+).

The protein belongs to the shikimate dehydrogenase family. In terms of assembly, homodimer.

It carries out the reaction shikimate + NADP(+) = 3-dehydroshikimate + NADPH + H(+). It participates in metabolic intermediate biosynthesis; chorismate biosynthesis; chorismate from D-erythrose 4-phosphate and phosphoenolpyruvate: step 4/7. Its function is as follows. Involved in the biosynthesis of the chorismate, which leads to the biosynthesis of aromatic amino acids. Catalyzes the reversible NADPH linked reduction of 3-dehydroshikimate (DHSA) to yield shikimate (SA). This chain is Shikimate dehydrogenase (NADP(+)), found in Streptococcus suis (strain 98HAH33).